We begin with the raw amino-acid sequence, 396 residues long: Subtilisin-like protease 5 (396 aa).

The signal sequence occupies residues methionine 1–alanine 20. Positions alanine 21–histidine 116 are excised as a propeptide. An Inhibitor I9 domain is found at tyrosine 37–isoleucine 113. Asparagine 63 carries an N-linked (GlcNAc...) asparagine glycan. The 272-residue stretch at proline 125 to arginine 396 folds into the Peptidase S8 domain. Residues aspartate 156 and histidine 187 each act as charge relay system in the active site. 2 N-linked (GlcNAc...) asparagine glycosylation sites follow: asparagine 230 and asparagine 248. The active-site Charge relay system is serine 342. A compositionally biased stretch (polar residues) spans threonine 377–leucine 389. The segment at threonine 377–arginine 396 is disordered. The N-linked (GlcNAc...) asparagine glycan is linked to asparagine 392.

Belongs to the peptidase S8 family.

The protein localises to the secreted. Its function is as follows. Secreted subtilisin-like serine protease with keratinolytic activity that contributes to pathogenicity. This chain is Subtilisin-like protease 5 (SUB5), found in Arthroderma benhamiae (Trichophyton mentagrophytes).